A 244-amino-acid chain; its full sequence is DNA repair protein RecO (244 aa).

This sequence belongs to the RecO family.

Its function is as follows. Involved in DNA repair and RecF pathway recombination. The protein is DNA repair protein RecO of Polynucleobacter asymbioticus (strain DSM 18221 / CIP 109841 / QLW-P1DMWA-1) (Polynucleobacter necessarius subsp. asymbioticus).